An 86-amino-acid chain; its full sequence is Photosystem I reaction center subunit PsaK (86 aa).

The chain crosses the membrane as a helical span at residues 15 to 34; the sequence is PWSTQVAMVMITCNLLAIVA.

The protein belongs to the PsaG/PsaK family.

The protein localises to the plastid. Its subcellular location is the chloroplast thylakoid membrane. The protein is Photosystem I reaction center subunit PsaK of Pyropia yezoensis (Susabi-nori).